A 485-amino-acid polypeptide reads, in one-letter code: Aspartyl/glutamyl-tRNA(Asn/Gln) amidotransferase subunit B (485 aa).

It belongs to the GatB/GatE family. GatB subfamily. Heterotrimer of A, B and C subunits.

The catalysed reaction is L-glutamyl-tRNA(Gln) + L-glutamine + ATP + H2O = L-glutaminyl-tRNA(Gln) + L-glutamate + ADP + phosphate + H(+). It catalyses the reaction L-aspartyl-tRNA(Asn) + L-glutamine + ATP + H2O = L-asparaginyl-tRNA(Asn) + L-glutamate + ADP + phosphate + 2 H(+). Functionally, allows the formation of correctly charged Asn-tRNA(Asn) or Gln-tRNA(Gln) through the transamidation of misacylated Asp-tRNA(Asn) or Glu-tRNA(Gln) in organisms which lack either or both of asparaginyl-tRNA or glutaminyl-tRNA synthetases. The reaction takes place in the presence of glutamine and ATP through an activated phospho-Asp-tRNA(Asn) or phospho-Glu-tRNA(Gln). This chain is Aspartyl/glutamyl-tRNA(Asn/Gln) amidotransferase subunit B, found in Borrelia recurrentis (strain A1).